The following is a 324-amino-acid chain: Olfactory receptor 4K15 (324 aa).

Residues 1 to 25 (MNETNHSRVTEFVLLGLSSSRELQP) are Extracellular-facing. N-linked (GlcNAc...) asparagine glycans are attached at residues asparagine 2 and asparagine 5. A helical transmembrane segment spans residues 26-49 (FLFLTFSLLYLAILLGNFLIILTV). The Cytoplasmic segment spans residues 50-57 (TSDSRLHT). Residues 58–79 (PMYFLLANLSFIDVCVASFATP) traverse the membrane as a helical segment. Topologically, residues 80-100 (KMIADFLVERKTISFDACLAQ) are extracellular. The cysteines at positions 97 and 189 are disulfide-linked. Residues 101-120 (IFFVHLFTGSEMVLLVSMAY) form a helical membrane-spanning segment. The Cytoplasmic portion of the chain corresponds to 121–139 (DRYVAICKPLHYMTVMSRR). Residues 140-158 (VCVVLVLISWFVGFIHTTS) traverse the membrane as a helical segment. The Extracellular segment spans residues 159-195 (QLAFTVNLPFCGPNKVDSFFCDLPLVTKLACIDTYVV). A helical transmembrane segment spans residues 196–219 (SLLIVADSGFLSLSSFLLLVVSYT). Residues 220 to 235 (VILVTVRNRSSASMAK) are Cytoplasmic-facing. A helical transmembrane segment spans residues 236 to 258 (ARSTLTAHITVVTLFFGPCIFIY). The Extracellular segment spans residues 259-269 (VWPFSSYSVDK). A helical membrane pass occupies residues 270–289 (VLAVFYTIFTLILNPVIYTL). The Cytoplasmic portion of the chain corresponds to 290–324 (RNKEVKAAMSKLKSRYLKPSQVSVVIRNVLFLETK).

This sequence belongs to the G-protein coupled receptor 1 family.

Its subcellular location is the cell membrane. Its function is as follows. Odorant receptor. This Homo sapiens (Human) protein is Olfactory receptor 4K15 (OR4K15).